We begin with the raw amino-acid sequence, 484 residues long: Crt homolog 2 (484 aa).

Over 1–57 the chain is Cytoplasmic; the sequence is MSEEKLPLLSPLNENDIENDYKDENLKSDLDKLSNVKKQSIIQRFKDYLKNSISKQT. The chain crosses the membrane as a helical span at residues 58–78; sequence ATVLVYVVLYILSGVINSLLL. The Vacuolar portion of the chain corresponds to 79–94; the sequence is KKVMNVFTNYGFFLNQ. The chain crosses the membrane as a helical span at residues 95–115; the sequence is LTNYGYVPIFGAIVLYKILFT. The Cytoplasmic segment spans residues 116–128; it reads NDIPKDTRSFPQW. A helical membrane pass occupies residues 129–149; it reads KFVIMGALDAVTGYFVVIGGI. The Vacuolar segment spans residues 150 to 154; it reads KTTGP. Residues 155 to 175 traverse the membrane as a helical segment; it reads LQQLLNQSVIPFTMLLSFIFL. At 176–178 the chain is on the cytoplasmic side; the sequence is KER. A helical membrane pass occupies residues 179–199; it reads YSLIQLGGALIIIGGVVVSLI. The Vacuolar segment spans residues 200–210; it reads PSLTGGNTSGN. The N-linked (GlcNAc...) asparagine glycan is linked to Asn-206. A helical membrane pass occupies residues 211–231; sequence MLFYNFFYLISMIPYAFSNVY. Topologically, residues 232-244 are cytoplasmic; that stretch reads KAIGFSTVEDMDV. Residues 245–265 traverse the membrane as a helical segment; it reads WYLQYFDALYQSLVGTVLFPI. Residues 266-328 are Vacuolar-facing; sequence NNWLPPPSDM…LGCDNCHGAW (63 aa). The N-linked (GlcNAc...) asparagine glycan is linked to Asn-302. The chain crosses the membrane as a helical span at residues 329–349; that stretch reads VVVLIYMAVNVLYNVFILLVL. At 350–355 the chain is on the cytoplasmic side; it reads KHAGAT. A helical transmembrane segment spans residues 356 to 378; sequence VFSIANTLRLPLTNIAFSFKFIM. The Vacuolar portion of the chain corresponds to 379–382; it reads GSDS. A helical transmembrane segment spans residues 383–403; that stretch reads NPFSGLSVAGLCIILLGLGGY. The Cytoplasmic segment spans residues 404-484; that stretch reads RVGSMIKQKK…RNQNSIYGDQ (81 aa).

Belongs to the CRT-like transporter family.

The protein resides in the vacuole membrane. Its function is as follows. Nutrient transporter. Involved in maintaining the osmotic homeostasis of the digestive vacuole. The protein is Crt homolog 2 (crtp2) of Dictyostelium discoideum (Social amoeba).